A 320-amino-acid chain; its full sequence is GDSL esterase/lipase At3g43570 (320 aa).

A signal peptide spans 1-19 (MKIQIIWLTLVLIVVEANA). N-linked (GlcNAc...) asparagine glycosylation occurs at Asn-25. Ser-37 serves as the catalytic Nucleophile. N-linked (GlcNAc...) asparagine glycosylation is present at Asn-287. Residues Asp-295 and His-298 contribute to the active site.

This sequence belongs to the 'GDSL' lipolytic enzyme family.

It is found in the secreted. This Arabidopsis thaliana (Mouse-ear cress) protein is GDSL esterase/lipase At3g43570.